The primary structure comprises 196 residues: Cell division protein SepF (196 aa).

A disordered region spans residues 15-80 (VEDDEEFNEP…PKRSASTFSK (66 aa)). Positions 57-72 (PAQTTPKPQTQTAAPK) are enriched in low complexity.

This sequence belongs to the SepF family. Homodimer. Interacts with FtsZ.

The protein localises to the cytoplasm. In terms of biological role, cell division protein that is part of the divisome complex and is recruited early to the Z-ring. Probably stimulates Z-ring formation, perhaps through the cross-linking of FtsZ protofilaments. Its function overlaps with FtsA. The protein is Cell division protein SepF of Lactococcus lactis subsp. cremoris (strain MG1363).